Here is a 66-residue protein sequence, read N- to C-terminus: MKADEVRGLSADQLKDKLADLKKEQFNLRFQKATGQLEKSSRINEVRKDIARVKTIARQKAAEAKA.

The protein belongs to the universal ribosomal protein uL29 family.

This Agrobacterium fabrum (strain C58 / ATCC 33970) (Agrobacterium tumefaciens (strain C58)) protein is Large ribosomal subunit protein uL29.